Consider the following 559-residue polypeptide: MAKGSKGLRASSKAVDPTLDALFASSAGPVQAPAKSKYSTLLDQKVREPAKPKVHLEEDDEVLSEISEELSFEEDGPSDEDEDEDEDEENSEQEDGSGDEQEEEESEDVDETMKDAPVELDDIIDATEDKSNKERKRKRKNDNDDLEGKYLDKVAAEEEADRAGKRQKNDALTKTEKPAVDEEDAGNESDIPVHETLVKDSKASDLDKAARTVFLANVSTEAISSKSAKKTLMAHLSSVLEKDATPPQTIESLRFRSVAFAGGSLPKRAAYITKSLMDSTTKSANAYVVYSTTAAARTAATKLNGTQVLDRHLRVDSVAHPSPTDHRRCVFVGNLGFVDDETVLNTNAEGDTTEKKKNKTPSDIEEGLWRTFSTQGKVENVRVVRDSKTRVGKGFAYVQFYDANDVEAALLLDGKKFPPMLPRKLRVTRAKDPRKTALAQERARGKHISTNGPKSTKYKHKATPEEQSMAGRTSKLLGRSAAVQQRHKKRPSAHGESREAEGQPAGIKGPEQFVFEGRRASARDGLPKDLKQKKGKGKKSGRPQNHGTKRASEWKKKKN.

Positions 24-194 are disordered; it reads ASSAGPVQAP…AGNESDIPVH (171 aa). The span at 44 to 56 shows a compositional bias: basic and acidic residues; sequence QKVREPAKPKVHL. The segment covering 57–110 has biased composition (acidic residues); sequence EEDDEVLSEISEELSFEEDGPSDEDEDEDEDEENSEQEDGSGDEQEEEESEDVD. Basic and acidic residues predominate over residues 141–180; sequence NDNDDLEGKYLDKVAAEEEADRAGKRQKNDALTKTEKPAV. RRM domains are found at residues 211–320 and 328–432; these read RTVF…SVAH and RCVF…RAKD. The interval 429-559 is disordered; it reads RAKDPRKTAL…RASEWKKKKN (131 aa). 2 stretches are compositionally biased toward basic and acidic residues: residues 516-532 and 550-559; these read EGRR…DLKQ and RASEWKKKKN.

The protein belongs to the RRM RBM34 family.

The protein localises to the nucleus. The protein resides in the nucleolus. Functionally, involved in pre-25S rRNA processing. This Gibberella zeae (strain ATCC MYA-4620 / CBS 123657 / FGSC 9075 / NRRL 31084 / PH-1) (Wheat head blight fungus) protein is Nucleolar protein 12 (NOP12).